The chain runs to 708 residues: Potassium-transporting ATPase ATP-binding subunit 2 (708 aa).

The tract at residues Met-1–Met-23 is disordered. The span at Leu-7 to Met-23 shows a compositional bias: basic and acidic residues. The next 4 membrane-spanning stretches (helical) occupy residues Met-49–Phe-69, Gly-84–Ala-104, Ile-235–Met-255, and Ser-283–Leu-303. Asp-339 serves as the catalytic 4-aspartylphosphate intermediate. ATP contacts are provided by residues Asp-376, Glu-380, Phe-407–Ser-414, and Lys-426. The Mg(2+) site is built by Asp-549 and Asp-553. Helical transmembrane passes span Phe-619–Leu-639, Ala-645–Leu-665, and Ile-683–Val-703.

This sequence belongs to the cation transport ATPase (P-type) (TC 3.A.3) family. Type IA subfamily. As to quaternary structure, the system is composed of three essential subunits: KdpA, KdpB and KdpC.

Its subcellular location is the cell inner membrane. The enzyme catalyses K(+)(out) + ATP + H2O = K(+)(in) + ADP + phosphate + H(+). In terms of biological role, part of the high-affinity ATP-driven potassium transport (or Kdp) system, which catalyzes the hydrolysis of ATP coupled with the electrogenic transport of potassium into the cytoplasm. This subunit is responsible for energy coupling to the transport system and for the release of the potassium ions to the cytoplasm. This is Potassium-transporting ATPase ATP-binding subunit 2 from Nostoc sp. (strain PCC 7120 / SAG 25.82 / UTEX 2576).